The primary structure comprises 42 residues: Photosystem I reaction center subunit IX (42 aa).

A helical transmembrane segment spans residues Tyr7–Ile27.

It belongs to the PsaJ family.

The protein resides in the plastid. The protein localises to the chloroplast thylakoid membrane. Functionally, may help in the organization of the PsaE and PsaF subunits. The protein is Photosystem I reaction center subunit IX of Daucus carota (Wild carrot).